We begin with the raw amino-acid sequence, 144 residues long: 3-dehydroquinate dehydratase (144 aa).

Tyrosine 23 functions as the Proton acceptor in the catalytic mechanism. 3 residues coordinate substrate: asparagine 74, histidine 80, and aspartate 87. Histidine 100 functions as the Proton donor in the catalytic mechanism. Substrate-binding positions include 101-102 (LS) and arginine 111.

It belongs to the type-II 3-dehydroquinase family. As to quaternary structure, homododecamer.

It catalyses the reaction 3-dehydroquinate = 3-dehydroshikimate + H2O. The protein operates within metabolic intermediate biosynthesis; chorismate biosynthesis; chorismate from D-erythrose 4-phosphate and phosphoenolpyruvate: step 3/7. Its function is as follows. Catalyzes a trans-dehydration via an enolate intermediate. This chain is 3-dehydroquinate dehydratase, found in Haemophilus ducreyi (strain 35000HP / ATCC 700724).